The following is a 39-amino-acid chain: Photosystem II reaction center protein L (39 aa).

Residues 18–38 (SLYLGLLLIAVLGILFSSYFF) form a helical membrane-spanning segment.

This sequence belongs to the PsbL family. PSII is composed of 1 copy each of membrane proteins PsbA, PsbB, PsbC, PsbD, PsbE, PsbF, PsbH, PsbI, PsbJ, PsbK, PsbL, PsbM, PsbT, PsbX, PsbY, PsbZ, Psb30/Ycf12, peripheral proteins PsbO, CyanoQ (PsbQ), PsbU, PsbV and a large number of cofactors. It forms dimeric complexes.

It localises to the cellular thylakoid membrane. Its function is as follows. One of the components of the core complex of photosystem II (PSII). PSII is a light-driven water:plastoquinone oxidoreductase that uses light energy to abstract electrons from H(2)O, generating O(2) and a proton gradient subsequently used for ATP formation. It consists of a core antenna complex that captures photons, and an electron transfer chain that converts photonic excitation into a charge separation. This subunit is found at the monomer-monomer interface and is required for correct PSII assembly and/or dimerization. The protein is Photosystem II reaction center protein L of Crocosphaera subtropica (strain ATCC 51142 / BH68) (Cyanothece sp. (strain ATCC 51142)).